The chain runs to 142 residues: Organic hydroperoxide resistance protein-like 2 (142 aa).

This sequence belongs to the OsmC/Ohr family.

In Staphylococcus epidermidis (strain ATCC 35984 / DSM 28319 / BCRC 17069 / CCUG 31568 / BM 3577 / RP62A), this protein is Organic hydroperoxide resistance protein-like 2.